A 509-amino-acid polypeptide reads, in one-letter code: Subtelomeric hrmA-associated cluster protein AFUB_078990 (509 aa).

Its function is as follows. Part of the subtelomeric hrmA-associated cluster (HAC) containing genes that alter the hyphal surface (such as reduced total chitin or increased beta-glucan exposure) and perturb inter-hyphal interactions within the developing biofilms, resulting in a loss of vertically aligned polarized growing filaments. Consequently, this hypoxia-typic morphotype (called H-MORPH) with altered biofilm architecture leads to increased hypoxia fitness, increased host inflammation, rapid disease progression, and mortality in a murine model of invasive aspergillosis. The chain is Subtelomeric hrmA-associated cluster protein AFUB_078990 from Aspergillus fumigatus (strain CBS 144.89 / FGSC A1163 / CEA10) (Neosartorya fumigata).